The primary structure comprises 847 residues: E4 SUMO-protein ligase PIAL1 (847 aa).

The interval 113 to 271 (VNSPVTLISQ…EVVGSNSDCD (159 aa)) is interacting domain (IND), required for interaction with MOM1 and PIAL2. Residues 268–349 (SDCDIIEGPS…LRKILEEVGR (82 aa)) form an SP-RING-type zinc finger. Cysteine 299, histidine 301, cysteine 322, and cysteine 325 together coordinate Zn(2+). 7 repeat units span residues 569–591 (QRPV…ENAD), 592–614 (QRWM…GNTN), 615–637 (QRPI…GNTD), 638–659 (HRST…GNAD), 660–682 (QRPM…GYAH), 683–705 (QRPM…GTPD), and 706–728 (QRPM…GTTD). The 7 X 23 AA approximate tandem repeats stretch occupies residues 569-728 (QRPVPSYIAH…LPVSYGGTTD (160 aa)).

This sequence belongs to the PIAL protein ligase family. As to quaternary structure, homodimer. Interacts with MOM1 and PIAL2 to form a high molecular mass complex which mediates transcriptional gene silencing at heterochromatin regions. In terms of tissue distribution, expressed in leaves, stems and flowers, and, at low levels, in siliques and old leaves.

The protein resides in the nucleus. The protein operates within protein modification; protein sumoylation. Functionally, together with MOM1 and PIAL2, regulates transcriptional gene silencing (TGS) independently of changes in DNA methylation. E4-type SUMO ligase that promotes SUMO chain formation in a SCE1-dependent manner and thus contributes to a pathway for proteolytic removal of sumoylation substrates. Involved in stress responses (e.g. osmotic, salt and abscisic acid ABA) and sulfur metabolism. The chain is E4 SUMO-protein ligase PIAL1 from Arabidopsis thaliana (Mouse-ear cress).